The sequence spans 197 residues: dITP/XTP pyrophosphatase (197 aa).

8–13 is a binding site for substrate; it reads TGNVGK. Residues Glu-40 and Asp-69 each contribute to the Mg(2+) site. Asp-69 functions as the Proton acceptor in the catalytic mechanism. Residues Ser-70, 154 to 157, Lys-177, and 182 to 183 contribute to the substrate site; these read FGYD and HR.

It belongs to the HAM1 NTPase family. As to quaternary structure, homodimer. It depends on Mg(2+) as a cofactor. Requires Mn(2+) as cofactor. Ni(2+) is required as a cofactor.

The enzyme catalyses XTP + H2O = XMP + diphosphate + H(+). It catalyses the reaction dITP + H2O = dIMP + diphosphate + H(+). It carries out the reaction ITP + H2O = IMP + diphosphate + H(+). Its function is as follows. Pyrophosphatase that catalyzes the hydrolysis of nucleoside triphosphates to their monophosphate derivatives, with a high preference for the non-canonical purine nucleotides XTP (xanthosine triphosphate), dITP (deoxyinosine triphosphate) and ITP. Can also efficiently hydrolyze 2'-deoxy-N-6-hydroxylaminopurine triphosphate (dHAPTP). Seems to function as a house-cleaning enzyme that removes non-canonical purine nucleotides from the nucleotide pool, thus preventing their incorporation into DNA/RNA and avoiding chromosomal lesions. To a much lesser extent, is also able to hydrolyze GTP, dGTP and dUTP, but shows very low activity toward the canonical nucleotides dATP, dCTP and dTTP and toward 8-oxo-dGTP, purine deoxyribose triphosphate, 2-aminopurine deoxyribose triphosphate and 2,6-diaminopurine deoxyribose triphosphate. Genetic interactions among priB, dam, lexA, nagC, polA, rdgB, rdgB, rep and uup link the PriA-PriB replication restart pathway to DNA double-strand break repair. This chain is dITP/XTP pyrophosphatase, found in Escherichia coli (strain K12).